We begin with the raw amino-acid sequence, 136 residues long: MVKFWVGVVSENHVKRGVDGGFCQVCHGKGGPLRRMKKGDYLLYYSPKIALDSNQKLQAFTAAGKMKDDRVYQFEMAPDFIPFRRDVEYYRSVQPCPIETARQHPDWKTYASQLRYGHFEVSRDFFMYIFNAMKLE.

Belongs to the UPF0310 family.

The polypeptide is UPF0310 protein SMU_442 (Streptococcus mutans serotype c (strain ATCC 700610 / UA159)).